The following is a 614-amino-acid chain: V-type proton ATPase catalytic subunit A (614 aa).

247-254 serves as a coordination point for ATP; the sequence is GAFGCGKT.

The protein belongs to the ATPase alpha/beta chains family. In terms of assembly, V-ATPase is a heteromultimeric enzyme made up of two complexes: the ATP-hydrolytic V1 complex and the proton translocation V0 complex. The V1 complex consists of three catalytic AB heterodimers that form a heterohexamer, three peripheral stalks each consisting of EG heterodimers, one central rotor including subunits D and F, and the regulatory subunits C and H. The proton translocation complex V0 consists of the proton transport subunit a, a ring of proteolipid subunits c9c'', rotary subunit d, subunits e and f, and the accessory subunits VhaAC45 and ATP6AP2.

The catalysed reaction is ATP + H2O + 4 H(+)(in) = ADP + phosphate + 5 H(+)(out). ATP hydrolysis occurs at the interface between the nucleotide-binding domains of subunits A and B. ATP hydrolysis triggers a conformational change in the subunits D and F, which induces a shift of subunit d. The c-ring is subsequently rotated and results in a continuous proton translocation across the membrane. Catalytic subunit of the V1 complex of vacuolar(H+)-ATPase (V-ATPase), a multisubunit enzyme composed of a peripheral complex (V1) that hydrolyzes ATP and a membrane integral complex (V0) that translocates protons. V-ATPase is responsible for acidifying and maintaining the pH of intracellular compartments and in some cell types, is targeted to the plasma membrane, where it is responsible for acidifying the extracellular environment. The protein is V-type proton ATPase catalytic subunit A of Anopheles gambiae (African malaria mosquito).